The chain runs to 122 residues: UPF0102 protein CPF_1959 (122 aa).

Belongs to the UPF0102 family.

This chain is UPF0102 protein CPF_1959, found in Clostridium perfringens (strain ATCC 13124 / DSM 756 / JCM 1290 / NCIMB 6125 / NCTC 8237 / Type A).